The chain runs to 273 residues: Tryptophan synthase alpha chain (273 aa).

Catalysis depends on proton acceptor residues Glu-56 and Asp-67.

Belongs to the TrpA family. In terms of assembly, tetramer of two alpha and two beta chains.

It carries out the reaction (1S,2R)-1-C-(indol-3-yl)glycerol 3-phosphate + L-serine = D-glyceraldehyde 3-phosphate + L-tryptophan + H2O. It participates in amino-acid biosynthesis; L-tryptophan biosynthesis; L-tryptophan from chorismate: step 5/5. The alpha subunit is responsible for the aldol cleavage of indoleglycerol phosphate to indole and glyceraldehyde 3-phosphate. This chain is Tryptophan synthase alpha chain, found in Shewanella baltica (strain OS185).